A 244-amino-acid chain; its full sequence is MIRTDAKDGALVLFSGGQDSATCVAWALERYQTVETLGFDYGQRHRVELECREGVREALKHRFPAWSDRLGDDHMIDLSVLGAISDTAMTRTIEIETTANGLPNTFVPGRNLMFMTIAAAIAYRRGLRVLVGGMCETDFSGYPDCRDDTMKALQVALNLGMDTRMVLETPLMWLDKAQTWQLAEQLGGDALVELIRVETHTCYVGERAELHDWGFGCGECPACKLRKRGYEAYLKGERVTEAPL.

Residue 14 to 24 (FSGGQDSATCV) participates in ATP binding. Residues cysteine 202, cysteine 217, cysteine 220, and cysteine 223 each contribute to the Zn(2+) site.

It belongs to the QueC family. Requires Zn(2+) as cofactor.

It carries out the reaction 7-carboxy-7-deazaguanine + NH4(+) + ATP = 7-cyano-7-deazaguanine + ADP + phosphate + H2O + H(+). It functions in the pathway purine metabolism; 7-cyano-7-deazaguanine biosynthesis. Functionally, catalyzes the ATP-dependent conversion of 7-carboxy-7-deazaguanine (CDG) to 7-cyano-7-deazaguanine (preQ(0)). The polypeptide is 7-cyano-7-deazaguanine synthase (Burkholderia cenocepacia (strain ATCC BAA-245 / DSM 16553 / LMG 16656 / NCTC 13227 / J2315 / CF5610) (Burkholderia cepacia (strain J2315))).